The following is a 472-amino-acid chain: Chromosomal replication initiator protein DnaA (472 aa).

The interval 1–73 (MSNMEHDRWS…LTCWQAELPE (73 aa)) is domain I, interacts with DnaA modulators. The domain II stretch occupies residues 73-128 (EVCRIDLTVRSPMRAAVAKEAAAPVEHRRAEHRPATETRSHATVPASSNHDALGGS). The interval 92–127 (EAAAPVEHRRAEHRPATETRSHATVPASSNHDALGG) is disordered. A compositionally biased stretch (basic and acidic residues) spans 97-112 (VEHRRAEHRPATETRS). The interval 129–351 (PLDPRLTFAS…GAINRLLAHS (223 aa)) is domain III, AAA+ region. Gly176, Gly178, Lys179, and Thr180 together coordinate ATP. The interval 352 to 472 (KLNAQPVTLE…VDSLKRQLQE (121 aa)) is domain IV, binds dsDNA.

The protein belongs to the DnaA family. In terms of assembly, oligomerizes as a right-handed, spiral filament on DNA at oriC.

It localises to the cytoplasm. Plays an essential role in the initiation and regulation of chromosomal replication. ATP-DnaA binds to the origin of replication (oriC) to initiate formation of the DNA replication initiation complex once per cell cycle. Binds the DnaA box (a 9 base pair repeat at the origin) and separates the double-stranded (ds)DNA. Forms a right-handed helical filament on oriC DNA; dsDNA binds to the exterior of the filament while single-stranded (ss)DNA is stabiized in the filament's interior. The ATP-DnaA-oriC complex binds and stabilizes one strand of the AT-rich DNA unwinding element (DUE), permitting loading of DNA polymerase. After initiation quickly degrades to an ADP-DnaA complex that is not apt for DNA replication. Binds acidic phospholipids. In Rhodopseudomonas palustris (strain HaA2), this protein is Chromosomal replication initiator protein DnaA.